Reading from the N-terminus, the 304-residue chain is Polyisoprenyl-teichoic acid--peptidoglycan teichoic acid transferase TagU (304 aa).

Topologically, residues 1-4 are cytoplasmic; sequence MKKK. A helical; Signal-anchor for type II membrane protein membrane pass occupies residues 5–25; the sequence is ILFWILGIIGILIIGGGAYAY. The Extracellular segment spans residues 26–304; the sequence is SIYSSVSKTL…KLRAHLEVTK (279 aa).

It belongs to the LytR/CpsA/Psr (LCP) family.

Its subcellular location is the cell membrane. It participates in cell wall biogenesis. In terms of biological role, may catalyze the final step in cell wall teichoic acid biosynthesis, the transfer of the anionic cell wall polymers (APs) from their lipid-linked precursor to the cell wall peptidoglycan (PG). This chain is Polyisoprenyl-teichoic acid--peptidoglycan teichoic acid transferase TagU, found in Bacillus cereus (strain ATCC 14579 / DSM 31 / CCUG 7414 / JCM 2152 / NBRC 15305 / NCIMB 9373 / NCTC 2599 / NRRL B-3711).